We begin with the raw amino-acid sequence, 309 residues long: Mitochondrial glycine transporter (309 aa).

Solcar repeat units follow at residues 2-94 (SNVG…LRAL), 124-207 (LTSQ…IKHE), and 219-304 (QATL…GLML). 6 helical membrane-spanning segments follow: residues 8-33 (LLSGGLSGLATTVCLQPFDLLKTRLQ), 69-95 (GTTPSLVRNVPGVALYMTSLTQLRALM), 130-155 (LIAGATTRVGVGFLLNPFSVLKARFE), 182-205 (GFLASSLRDAPYAGLFVVFYEGIK), 223-249 (IHGLSAASAGAIATMATHPFDVIKTKI), and 279-297 (GASLRMSRKVLSSAIGWAV).

Belongs to the mitochondrial carrier (TC 2.A.29) family. SLC25A38 subfamily.

The protein localises to the mitochondrion inner membrane. The enzyme catalyses glycine(in) = glycine(out). Functionally, mitochondrial glycine transporter that imports glycine into the mitochondrial matrix. Plays an important role in providing glycine for the first enzymatic step in heme biosynthesis, the condensation of glycine with succinyl-CoA to produce 5-aminolevulinate (ALA) in the mitochondrial matrix. The sequence is that of Mitochondrial glycine transporter from Laccaria bicolor (strain S238N-H82 / ATCC MYA-4686) (Bicoloured deceiver).